The following is a 543-amino-acid chain: Heparanase-like protein 1 (543 aa).

The N-terminal stretch at 1–24 (MGFRVCVIVVFLGCLLLVPEKTMA) is a signal peptide. A glycan (N-linked (GlcNAc...) asparagine) is linked at N184. The Proton donor role is filled by E201. Residue N304 is glycosylated (N-linked (GlcNAc...) asparagine). E320 (nucleophile) is an active-site residue. N-linked (GlcNAc...) asparagine glycans are attached at residues N425 and N428.

It belongs to the glycosyl hydrolase 79 family.

Its subcellular location is the lysosome membrane. It localises to the secreted. In terms of biological role, endoglycosidase which is a cell surface and extracellular matrix-degrading enzyme. Cleaves heparan sulfate proteoglycans (HSPGs) into heparan sulfate side chains and core proteoglycans. This chain is Heparanase-like protein 1, found in Arabidopsis thaliana (Mouse-ear cress).